The following is a 612-amino-acid chain: Bifunctional 6(G)-fructosyltransferase/2,1-fructan:2,1-fructan 1-fructosyltransferase (612 aa).

Residues Met1–Ser24 lie on the Cytoplasmic side of the membrane. Residues Leu25 to Thr45 form a helical; Signal-anchor for type II membrane protein membrane-spanning segment. The Vacuolar segment spans residues Gly46–Phe612. Substrate-binding positions include Tyr82–Asp85, Gln101, and Trp109. Asp85 is a catalytic residue. An N-linked (GlcNAc...) asparagine glycan is attached at Asn111. Substrate-binding positions include Trp144–Thr145 and Arg208–Asp209. 2 N-linked (GlcNAc...) asparagine glycosylation sites follow: Asn216 and Asn230. Glu267 is a binding site for substrate. A glycan (N-linked (GlcNAc...) asparagine) is linked at Asn465. An intrachain disulfide couples Cys466 to Cys514. N-linked (GlcNAc...) asparagine glycans are attached at residues Asn586 and Asn603.

The protein belongs to the glycosyl hydrolase 32 family. In terms of processing, might be processed in two N-terminal and C-terminal proteolytic fragments.

Its subcellular location is the vacuole membrane. The catalysed reaction is [1-beta-D-fructofuranosyl-(2-&gt;1)-]m+1 alpha-D-glucopyranoside + [1-beta-D-fructofuranosyl-(2-&gt;1)-]n+1 alpha-D-glucopyranoside = [1-beta-D-fructofuranosyl-(2-&gt;1)-]m alpha-D-glucopyranoside + [1-beta-D-fructofuranosyl-(2-&gt;1)-]n+1 beta-D-fructofuranosyl-(2-&gt;6)-alpha-D-glucopyranoside (m &gt; 0, n &gt;= 0).. It catalyses the reaction [beta-D-fructosyl-(2-&gt;1)-]m + [beta-D-fructosyl-(2-&gt;1)-]n = [beta-D-fructosyl-(2-&gt;1)-]m-1 + [beta-D-fructosyl-(2-&gt;1)-]n+1.. Functionally, involved in the synthesis of fructan of the inulin neoseries. Catalyzes a self-transfer between identical oligosaccharides of the 1-kestose series. The sequence is that of Bifunctional 6(G)-fructosyltransferase/2,1-fructan:2,1-fructan 1-fructosyltransferase from Allium cepa (Onion).